A 504-amino-acid chain; its full sequence is Maturase K (504 aa).

This sequence belongs to the intron maturase 2 family. MatK subfamily.

The protein resides in the plastid. It localises to the chloroplast. In terms of biological role, usually encoded in the trnK tRNA gene intron. Probably assists in splicing its own and other chloroplast group II introns. The chain is Maturase K from Quercus coccifera (Kermes oak).